The following is a 179-amino-acid chain: ADP-ribosylation factor-like protein 5A (179 aa).

Glycine 2 carries the N-myristoyl glycine lipid modification. GTP contacts are provided by residues glycine 23 to threonine 30, aspartate 66 to glutamine 70, asparagine 125 to aspartate 128, and alanine 159.

This sequence belongs to the small GTPase superfamily. Arf family. In terms of tissue distribution, low amounts were found in most tissues examined with highest levels in brain, intestine and thymus.

In terms of biological role, lacks ADP-ribosylation enhancing activity. In Rattus norvegicus (Rat), this protein is ADP-ribosylation factor-like protein 5A (Arl5a).